Reading from the N-terminus, the 184-residue chain is Crossover junction endodeoxyribonuclease RuvC (184 aa).

Active-site residues include Asp7, Glu68, and Asp141. Asp7, Glu68, and Asp141 together coordinate Mg(2+).

The protein belongs to the RuvC family. As to quaternary structure, homodimer which binds Holliday junction (HJ) DNA. The HJ becomes 2-fold symmetrical on binding to RuvC with unstacked arms; it has a different conformation from HJ DNA in complex with RuvA. In the full resolvosome a probable DNA-RuvA(4)-RuvB(12)-RuvC(2) complex forms which resolves the HJ. It depends on Mg(2+) as a cofactor.

The protein localises to the cytoplasm. The catalysed reaction is Endonucleolytic cleavage at a junction such as a reciprocal single-stranded crossover between two homologous DNA duplexes (Holliday junction).. The RuvA-RuvB-RuvC complex processes Holliday junction (HJ) DNA during genetic recombination and DNA repair. Endonuclease that resolves HJ intermediates. Cleaves cruciform DNA by making single-stranded nicks across the HJ at symmetrical positions within the homologous arms, yielding a 5'-phosphate and a 3'-hydroxyl group; requires a central core of homology in the junction. The consensus cleavage sequence is 5'-(A/T)TT(C/G)-3'. Cleavage occurs on the 3'-side of the TT dinucleotide at the point of strand exchange. HJ branch migration catalyzed by RuvA-RuvB allows RuvC to scan DNA until it finds its consensus sequence, where it cleaves and resolves the cruciform DNA. The sequence is that of Crossover junction endodeoxyribonuclease RuvC from Mycobacterium ulcerans (strain Agy99).